The sequence spans 345 residues: UDP-3-O-acylglucosamine N-acyltransferase (345 aa).

Catalysis depends on histidine 253, which acts as the Proton acceptor.

Belongs to the transferase hexapeptide repeat family. LpxD subfamily. In terms of assembly, homotrimer.

The catalysed reaction is a UDP-3-O-[(3R)-3-hydroxyacyl]-alpha-D-glucosamine + a (3R)-hydroxyacyl-[ACP] = a UDP-2-N,3-O-bis[(3R)-3-hydroxyacyl]-alpha-D-glucosamine + holo-[ACP] + H(+). The protein operates within bacterial outer membrane biogenesis; LPS lipid A biosynthesis. Catalyzes the N-acylation of UDP-3-O-acylglucosamine using 3-hydroxyacyl-ACP as the acyl donor. Is involved in the biosynthesis of lipid A, a phosphorylated glycolipid that anchors the lipopolysaccharide to the outer membrane of the cell. This chain is UDP-3-O-acylglucosamine N-acyltransferase, found in Rickettsia massiliae (strain Mtu5).